Reading from the N-terminus, the 77-residue chain is Acyl carrier protein (77 aa).

One can recognise a Carrier domain in the interval Ser2–Gly77. O-(pantetheine 4'-phosphoryl)serine is present on Ser37.

Belongs to the acyl carrier protein (ACP) family. 4'-phosphopantetheine is transferred from CoA to a specific serine of apo-ACP by AcpS. This modification is essential for activity because fatty acids are bound in thioester linkage to the sulfhydryl of the prosthetic group.

It is found in the cytoplasm. It participates in lipid metabolism; fatty acid biosynthesis. Functionally, carrier of the growing fatty acid chain in fatty acid biosynthesis. This Psychromonas ingrahamii (strain DSM 17664 / CCUG 51855 / 37) protein is Acyl carrier protein.